Consider the following 363-residue polypeptide: Chorismate synthase (363 aa).

Arg48 and Arg54 together coordinate NADP(+). FMN is bound by residues 131-133, 244-245, Gly288, 303-307, and Arg329; these read RSS, NA, and KPTSS.

This sequence belongs to the chorismate synthase family. Homotetramer. FMNH2 serves as cofactor.

It carries out the reaction 5-O-(1-carboxyvinyl)-3-phosphoshikimate = chorismate + phosphate. It participates in metabolic intermediate biosynthesis; chorismate biosynthesis; chorismate from D-erythrose 4-phosphate and phosphoenolpyruvate: step 7/7. In terms of biological role, catalyzes the anti-1,4-elimination of the C-3 phosphate and the C-6 proR hydrogen from 5-enolpyruvylshikimate-3-phosphate (EPSP) to yield chorismate, which is the branch point compound that serves as the starting substrate for the three terminal pathways of aromatic amino acid biosynthesis. This reaction introduces a second double bond into the aromatic ring system. The sequence is that of Chorismate synthase from Hyphomonas neptunium (strain ATCC 15444).